Reading from the N-terminus, the 402-residue chain is E3 ubiquitin-protein ligase makorin-2 (402 aa).

C3H1-type zinc fingers lie at residues 2–29, 31–58, and 141–168; these read TTKQ…HDPS, SKPS…HVKL, and QDLP…HGDK. Residues 169–198 are makorin-type Cys-His; it reads CEVCGLQVLDPHNPEQRSMHEKMCLLAFEA. An RING-type zinc finger spans residues 214 to 268; sequence CSICMEVVVQKMNPSDRRFGILSSCCHVFCLACIRKWRCTRNFSNKIIKSCPECR. The segment at 297–326 adopts a C3H1-type 4 zinc-finger fold; that stretch reads GVGKKPCKYFDQGRGSCPFGGKCLYLHALP.

It localises to the cytoplasm. The protein resides in the nucleus. It carries out the reaction S-ubiquitinyl-[E2 ubiquitin-conjugating enzyme]-L-cysteine + [acceptor protein]-L-lysine = [E2 ubiquitin-conjugating enzyme]-L-cysteine + N(6)-ubiquitinyl-[acceptor protein]-L-lysine.. It functions in the pathway protein modification; protein ubiquitination. Its function is as follows. E3 ubiquitin ligase catalyzing the covalent attachment of ubiquitin moieties onto substrate proteins. Inhibits neurogenesis and axis formation during embryonic development by modulating the phosphatidylinositol 3-kinase (PI3K) pathway. Acts downstream of PI3K and akt1 to up-regulate gsk3b mRNA expression. This Takifugu rubripes (Japanese pufferfish) protein is E3 ubiquitin-protein ligase makorin-2.